Consider the following 414-residue polypeptide: uncharacterized protein (414 aa).

The chain crosses the membrane as a helical span at residues 367–384; it reads TTWALTLICIACILLFFV.

It is found in the virion membrane. This is an uncharacterized protein from Human cytomegalovirus (strain Merlin) (HHV-5).